The sequence spans 56 residues: Large ribosomal subunit protein bL32 (56 aa).

Over residues 1-16 (MAVQKSKKSRARRGMR) the composition is skewed to basic residues. The disordered stretch occupies residues 1–56 (MAVQKSKKSRARRGMRRSHDAISGPSLTVDQTSGETHRRHHVTADGYYKGVQVISK). A compositionally biased stretch (polar residues) spans 25–34 (PSLTVDQTSG).

Belongs to the bacterial ribosomal protein bL32 family.

This chain is Large ribosomal subunit protein bL32, found in Pseudoalteromonas translucida (strain TAC 125).